Consider the following 1486-residue polypeptide: Glutamate synthase [NADPH] large chain (1486 aa).

Positions 1–11 (MLYDKSLERDN) are excised as a propeptide. Residue Cys-12 is the Nucleophile of the active site. In terms of domain architecture, Glutamine amidotransferase type-2 spans 12-402 (CGFGLIAHIE…PGELMVIDTR (391 aa)). An FMN-binding site is contributed by 1049–1101 (LVETQQALVANGLRHKIRLQVDGGLKTGVDIIKAAILGAESFGFGTGPMVALG). Residues Cys-1102, Cys-1108, and Cys-1113 each coordinate [3Fe-4S] cluster.

It belongs to the glutamate synthase family. In terms of assembly, aggregate of 4 catalytic active heterodimers, consisting of a large and a small subunit. Requires [3Fe-4S] cluster as cofactor. FAD serves as cofactor. FMN is required as a cofactor.

It catalyses the reaction 2 L-glutamate + NADP(+) = L-glutamine + 2-oxoglutarate + NADPH + H(+). It functions in the pathway amino-acid biosynthesis; L-glutamate biosynthesis via GLT pathway; L-glutamate from 2-oxoglutarate and L-glutamine (NADP(+) route): step 1/1. It participates in energy metabolism; nitrogen metabolism. In terms of biological role, catalyzes the conversion of L-glutamine and 2-oxoglutarate into two molecules of L-glutamate. In Escherichia coli (strain K12), this protein is Glutamate synthase [NADPH] large chain (gltB).